We begin with the raw amino-acid sequence, 525 residues long: MSDIHEHKILILDFGSQYTQLIARRIREIGVYCELWAWDVTEAQIREFAPNGIILAGGPESVTADNSPRAPEYVFNAGVPVLGICYGMQTMSEQLGGKVIQGVGEGEFGYAQIEMLAESALFKGIEDAVSSDGKSLLDVWMSHGDKVSAIPAGFVAVAKTDTCPFAAMSCEEKRFYGVQFHPEVTHTRQGMRMLSHFALDICGCAANWKPSSIIEDAIERLKKQVGDDEVILGLSGGVDSSVVAMLLHRAIGKKLTCVFVDNGLLRLNEAKQVMEMFGDHFGLNIVHVDAENRFLDALKGEADPEAKRKIIGRVFVEIFDEEAKKCVNAKWLAQGTIYPDVIESAGSATGKAHVIKSHHNVGGLPDDMELGLVEPLRELFKDEVRKIGLELGLPYNMLYRHPFPGPGLGVRVLGEVKKEYCDLLRRADAIFIEELHKADLYNKVSQAFTVFLPVRSVGVMGDGRKYDWVVSLRAVETIDFMTAHWAHLPYDFLGRVSNRIINEVDGISRVVYDISGKPPATIEWE.

The 200-residue stretch at 8–207 (KILILDFGSQ…ALDICGCAAN (200 aa)) folds into the Glutamine amidotransferase type-1 domain. The active-site Nucleophile is the Cys-85. Catalysis depends on residues His-181 and Glu-183. In terms of domain architecture, GMPS ATP-PPase spans 208–400 (WKPSSIIEDA…LGLPYNMLYR (193 aa)). 235–241 (SGGVDSS) is an ATP binding site.

In terms of assembly, homodimer.

It carries out the reaction XMP + L-glutamine + ATP + H2O = GMP + L-glutamate + AMP + diphosphate + 2 H(+). The protein operates within purine metabolism; GMP biosynthesis; GMP from XMP (L-Gln route): step 1/1. Functionally, catalyzes the synthesis of GMP from XMP. In Shewanella oneidensis (strain ATCC 700550 / JCM 31522 / CIP 106686 / LMG 19005 / NCIMB 14063 / MR-1), this protein is GMP synthase [glutamine-hydrolyzing].